The following is a 1089-amino-acid chain: Protein phosphatase 1 regulatory subunit 3A (1089 aa).

The segment at 32-57 (KATFKPGFSPQPSRRGSGSSEDMYLD) is disordered. Residues 37 to 51 (PGFSPQPSRRGSGSS) show a composition bias toward low complexity. Phosphoserine; by GSK3 occurs at positions 40 and 44. Phosphoserine is present on residues Ser48 and Ser51. Thr58 carries the post-translational modification Phosphothreonine. Residues 64 to 67 (RRVS) carry the PP1-binding motif motif. A Phosphoserine; by PKA modification is found at Ser67. One can recognise a CBM21 domain in the interval 123 to 231 (EQLQVQKAVL…NNNGTNYILV (109 aa)). Disordered stretches follow at residues 385–420 (FYHS…GDTS), 479–501 (HGDS…KVDN), and 566–649 (PCPS…SDIA). Over residues 581–600 (SGSNLEPGTSDLSSPRNFSP) the composition is skewed to polar residues. Basic and acidic residues predominate over residues 602-614 (TDDHLFQADRENS). Residues 615-625 (DSSNPENQNMN) are compositionally biased toward polar residues. Ser821 is modified (phosphoserine). The disordered stretch occupies residues 949–968 (IMKSGSGGERGGGPILQQKE). The segment covering 953 to 962 (GSGGERGGGP) has biased composition (gly residues). The chain crosses the membrane as a helical span at residues 1047–1067 (LLFLIFLATVYYYDLMIGLAF).

Interacts with PPP1CC catalytic subunit of PP1, and associates with glycogen. Post-translationally, phosphorylation at Ser-48 by ISPK stimulates the dephosphorylation of glycogen synthase and phosphorylase kinase. Skeletal muscle and heart.

It localises to the membrane. Seems to act as a glycogen-targeting subunit for PP1. PP1 is essential for cell division, and participates in the regulation of glycogen metabolism, muscle contractility and protein synthesis. Plays an important role in glycogen synthesis but is not essential for insulin activation of glycogen synthase. The sequence is that of Protein phosphatase 1 regulatory subunit 3A (Ppp1r3a) from Mus musculus (Mouse).